The sequence spans 445 residues: Ribosomal protein uS12 methylthiotransferase RimO (445 aa).

An MTTase N-terminal domain is found at 10 to 120 (PKVGFVSLGC…VVNAVHEVVP (111 aa)). [4Fe-4S] cluster contacts are provided by cysteine 19, cysteine 55, cysteine 84, cysteine 153, cysteine 157, and cysteine 160. The 240-residue stretch at 139-378 (LTPRHYAYLK…AHQQAISSAR (240 aa)) folds into the Radical SAM core domain. Positions 380–445 (QLRIGREIEV…DEYDLWAEQI (66 aa)) constitute a TRAM domain.

Belongs to the methylthiotransferase family. RimO subfamily. [4Fe-4S] cluster is required as a cofactor.

The protein localises to the cytoplasm. The enzyme catalyses L-aspartate(89)-[ribosomal protein uS12]-hydrogen + (sulfur carrier)-SH + AH2 + 2 S-adenosyl-L-methionine = 3-methylsulfanyl-L-aspartate(89)-[ribosomal protein uS12]-hydrogen + (sulfur carrier)-H + 5'-deoxyadenosine + L-methionine + A + S-adenosyl-L-homocysteine + 2 H(+). Its function is as follows. Catalyzes the methylthiolation of an aspartic acid residue of ribosomal protein uS12. The polypeptide is Ribosomal protein uS12 methylthiotransferase RimO (Pseudomonas fluorescens (strain Pf0-1)).